The sequence spans 593 residues: Epidermal growth factor receptor kinase substrate 8-like protein 3 (593 aa).

The region spanning 28–155 (QHRVEHLMTC…ALEEELEQRP (128 aa)) is the PTB domain. Disordered regions lie at residues 149-171 (EELE…RGPA), 184-239 (LEPG…ERDE), and 374-451 (ADWT…PAQP). Ser-231 carries the phosphoserine modification. Positions 386 to 401 (PTFSDDWQLPEPSSQA) are enriched in polar residues. Residues 425 to 435 (PQEKTHNHDPQ) are compositionally biased toward basic and acidic residues. Positions 450–509 (QPALKMQVLYEFEARNPRELTVVQGEKLEVLDHSKRWWLVKNEAGRSGYIPSNILEPLQP) constitute an SH3 domain.

It belongs to the EPS8 family. Interacts with ABI1. Part of a complex that contains SOS1, ABI1 and EPS8L2. Interacts with FASLG.

The protein localises to the cytoplasm. This Homo sapiens (Human) protein is Epidermal growth factor receptor kinase substrate 8-like protein 3 (EPS8L3).